The chain runs to 491 residues: Ribonuclease Y (491 aa).

A helical transmembrane segment spans residues 4 to 24; it reads LIATVGVVAVAALVIAIFVVI. One can recognise a KH domain in the interval 181 to 247; it reads VVSVVHLPGD…RVALERLVDD (67 aa). The 94-residue stretch at 307–400 folds into the HD domain; the sequence is VLKHLVETAH…TQAADAISGG (94 aa).

It belongs to the RNase Y family.

The protein resides in the cell membrane. Functionally, endoribonuclease that initiates mRNA decay. The chain is Ribonuclease Y from Acidothermus cellulolyticus (strain ATCC 43068 / DSM 8971 / 11B).